The primary structure comprises 338 residues: Uroporphyrinogen decarboxylase (338 aa).

Substrate contacts are provided by residues 23–27, D72, Y146, T201, and H312; that span reads RQAGR.

Belongs to the uroporphyrinogen decarboxylase family. In terms of assembly, homodimer.

It is found in the cytoplasm. It carries out the reaction uroporphyrinogen III + 4 H(+) = coproporphyrinogen III + 4 CO2. It functions in the pathway porphyrin-containing compound metabolism; protoporphyrin-IX biosynthesis; coproporphyrinogen-III from 5-aminolevulinate: step 4/4. Catalyzes the decarboxylation of four acetate groups of uroporphyrinogen-III to yield coproporphyrinogen-III. The chain is Uroporphyrinogen decarboxylase from Thermodesulfovibrio yellowstonii (strain ATCC 51303 / DSM 11347 / YP87).